The chain runs to 369 residues: Phospho-N-acetylmuramoyl-pentapeptide-transferase (369 aa).

The next 10 membrane-spanning stretches (helical) occupy residues 3-23 (ALLF…PLFI), 53-73 (GGIV…LLTW), 81-101 (VTPS…VGFL), 118-138 (WQKI…AITL), 162-182 (FMAL…CLIV), 198-218 (LAAG…FWQF), 240-260 (PLDL…FLWW), 267-287 (IFMG…LAIL), 290-310 (TELL…SVVL), and 347-367 (FWII…LEWI).

The protein belongs to the glycosyltransferase 4 family. MraY subfamily. The cofactor is Mg(2+).

It is found in the cell membrane. It catalyses the reaction UDP-N-acetyl-alpha-D-muramoyl-L-alanyl-gamma-D-glutamyl-meso-2,6-diaminopimeloyl-D-alanyl-D-alanine + di-trans,octa-cis-undecaprenyl phosphate = di-trans,octa-cis-undecaprenyl diphospho-N-acetyl-alpha-D-muramoyl-L-alanyl-D-glutamyl-meso-2,6-diaminopimeloyl-D-alanyl-D-alanine + UMP. The protein operates within cell wall biogenesis; peptidoglycan biosynthesis. Functionally, catalyzes the initial step of the lipid cycle reactions in the biosynthesis of the cell wall peptidoglycan: transfers peptidoglycan precursor phospho-MurNAc-pentapeptide from UDP-MurNAc-pentapeptide onto the lipid carrier undecaprenyl phosphate, yielding undecaprenyl-pyrophosphoryl-MurNAc-pentapeptide, known as lipid I. This chain is Phospho-N-acetylmuramoyl-pentapeptide-transferase, found in Clavibacter michiganensis subsp. michiganensis (strain NCPPB 382).